Here is a 654-residue protein sequence, read N- to C-terminus: Periplasmic beta-glucosidase/beta-xylosidase (654 aa).

Positions 1-25 are cleaved as a signal peptide; the sequence is MEKSATRQKALLIALPLLFSPLASA. Catalysis depends on residues D235 and D360.

The protein belongs to the glycosyl hydrolase 3 family.

Its subcellular location is the periplasm. It catalyses the reaction Hydrolysis of terminal, non-reducing beta-D-glucosyl residues with release of beta-D-glucose.. The catalysed reaction is Hydrolysis of (1-&gt;4)-beta-D-xylans, to remove successive D-xylose residues from the non-reducing termini.. In terms of biological role, exhibits both beta-glucosidase and beta-xylosidase activities. In Dickeya chrysanthemi (Pectobacterium chrysanthemi), this protein is Periplasmic beta-glucosidase/beta-xylosidase (bgxA).